A 446-amino-acid chain; its full sequence is tRNA-2-methylthio-N(6)-dimethylallyladenosine synthase (446 aa).

Residues 3–120 enclose the MTTase N-terminal domain; sequence KKLFIETHGC…LPEMIDAARS (118 aa). [4Fe-4S] cluster-binding residues include C12, C49, C83, C157, C161, and C164. The region spanning 143–375 is the Radical SAM core domain; that stretch reads RVDGPTAFVS…QSRIHQQGYE (233 aa). The region spanning 378–442 is the TRAM domain; that stretch reads RRMVGSTQRI…PHSLRGTLID (65 aa).

This sequence belongs to the methylthiotransferase family. MiaB subfamily. As to quaternary structure, monomer. It depends on [4Fe-4S] cluster as a cofactor.

Its subcellular location is the cytoplasm. It catalyses the reaction N(6)-dimethylallyladenosine(37) in tRNA + (sulfur carrier)-SH + AH2 + 2 S-adenosyl-L-methionine = 2-methylsulfanyl-N(6)-dimethylallyladenosine(37) in tRNA + (sulfur carrier)-H + 5'-deoxyadenosine + L-methionine + A + S-adenosyl-L-homocysteine + 2 H(+). In terms of biological role, catalyzes the methylthiolation of N6-(dimethylallyl)adenosine (i(6)A), leading to the formation of 2-methylthio-N6-(dimethylallyl)adenosine (ms(2)i(6)A) at position 37 in tRNAs that read codons beginning with uridine. The chain is tRNA-2-methylthio-N(6)-dimethylallyladenosine synthase from Pseudomonas aeruginosa (strain UCBPP-PA14).